We begin with the raw amino-acid sequence, 531 residues long: T-complex protein 1 subunit zeta (531 aa).

At A2 the chain carries N-acetylalanine. K5 is subject to N6-acetyllysine. G39 is an ADP binding site. ATP is bound at residue G39. A Mg(2+)-binding site is contributed by D90. 6 residues coordinate ADP: G91, T92, T93, S94, T158, and K159. G91, T92, and T93 together coordinate ATP. K199 is subject to N6-acetyllysine. S205 carries the post-translational modification Phosphoserine. K251 participates in a covalent cross-link: Glycyl lysine isopeptide (Lys-Gly) (interchain with G-Cter in SUMO2). N6-acetyllysine occurs at positions 287, 365, 377, and 388. ADP is bound at residue A411. ATP contacts are provided by A411, G412, D496, and K501. D496 contacts ADP.

Belongs to the TCP-1 chaperonin family. In terms of assembly, component of the chaperonin-containing T-complex (TRiC), a hexadecamer composed of two identical back-to-back stacked rings enclosing a protein folding chamber. Each ring is made up of eight different subunits: TCP1/CCT1, CCT2, CCT3, CCT4, CCT5, CCT6A/CCT6, CCT7, CCT8. Interacts with PACRG.

The protein resides in the cytoplasm. It carries out the reaction ATP + H2O = ADP + phosphate + H(+). Functionally, component of the chaperonin-containing T-complex (TRiC), a molecular chaperone complex that assists the folding of actin, tubulin and other proteins upon ATP hydrolysis. The TRiC complex mediates the folding of WRAP53/TCAB1, thereby regulating telomere maintenance. This Pongo abelii (Sumatran orangutan) protein is T-complex protein 1 subunit zeta (CCT6).